The following is a 466-amino-acid chain: RUS family member 1 (466 aa).

At Ala2 the chain carries N-acetylalanine. The helical transmembrane segment at 245 to 265 threads the bilayer; that stretch reads LLMLPLVSDCLSLSLGCFILL.

This sequence belongs to the RUS1 family.

It localises to the membrane. This is RUS family member 1 (Rusf1) from Rattus norvegicus (Rat).